A 229-amino-acid polypeptide reads, in one-letter code: MAKLTKKMKAIKAGVDSTKAYEINEAIAVLKQFATAKFVESVDVAVNLGIDPRKSDQNVRGATVLPHGTGREVRVAVFTQGANADAAKEAGADLVGMEDLAEQIKKGEMNFDVVIASPDAMRVVGQLGQVLGPRGLMPNPKVGTVTPNVAEAVKNAKSGQIRYRNDKNGIIHTTIGKANFSEVQLKENLQALLAALNKAKPTTAKGIFIKKVSISTTMGAGVAVDQASL.

It belongs to the universal ribosomal protein uL1 family. Part of the 50S ribosomal subunit.

Binds directly to 23S rRNA. The L1 stalk is quite mobile in the ribosome, and is involved in E site tRNA release. Functionally, protein L1 is also a translational repressor protein, it controls the translation of the L11 operon by binding to its mRNA. This Haemophilus influenzae (strain 86-028NP) protein is Large ribosomal subunit protein uL1.